The sequence spans 197 residues: Transmembrane protein 126A (197 aa).

Topologically, residues 1-35 (MENHEPDGTIIKENLTDIIARKINQLPEAERNLLE) are mitochondrial matrix. A helical transmembrane segment spans residues 36 to 56 (NGSTYVGLNAALCGLIANSLF). At 57–58 (RR) the chain is on the mitochondrial intermembrane side. Residues 59–79 (ILHVTQARIAAGLPMAVIPFL) traverse the membrane as a helical segment. Over 80 to 107 (TANVSYKGFVSLPLNTGDLQCETCTVTR) the chain is Mitochondrial matrix. The chain crosses the membrane as a helical span at residues 108–128 (GGLVGLVFGGLYPVFLAIPVN). The Mitochondrial intermembrane segment spans residues 129–160 (GGLAARYNSALLPEKGNILNYWIRISKPVFRK). A helical membrane pass occupies residues 161–177 (MLFPILLQTGFAAYLGS). The Mitochondrial matrix segment spans residues 178–197 (RQYKLLIKALQLPEPGLEIE).

The protein belongs to the TMEM126 family. Interacts with OXA1L; promoting cotranslational quality control in mitochondria.

It is found in the mitochondrion inner membrane. Protein required for the cotranslational protein quality control in the inner membrane of the mitochondria. Associates with newly synthesized polypeptides and may act as a chaperone that cooperates with OXA1L for the insertion of newly synthesized mitochondrial proteins into the inner membrane. Required for the assembly of the ND4 module of mitochondrial complex I. This is Transmembrane protein 126A (TMEM126A) from Bos taurus (Bovine).